The chain runs to 396 residues: S-adenosylmethionine synthase 1 (396 aa).

Glu12 is a Mg(2+) binding site. Position 18 (His18) interacts with ATP. Glu46 contributes to the K(+) binding site. L-methionine contacts are provided by Glu59 and Gln102. Residues 170–172 (DGK), 238–241 (SGRF), Asp249, 255–256 (RK), Ala272, Lys276, and Lys280 each bind ATP. L-methionine is bound at residue Asp249. L-methionine is bound at residue Lys280.

This sequence belongs to the AdoMet synthase family. Homotetramer. Mn(2+) is required as a cofactor. The cofactor is Mg(2+). Requires Co(2+) as cofactor. It depends on K(+) as a cofactor.

The protein localises to the cytoplasm. It carries out the reaction L-methionine + ATP + H2O = S-adenosyl-L-methionine + phosphate + diphosphate. The protein operates within amino-acid biosynthesis; S-adenosyl-L-methionine biosynthesis; S-adenosyl-L-methionine from L-methionine: step 1/1. Functionally, catalyzes the formation of S-adenosylmethionine from methionine and ATP. The reaction comprises two steps that are both catalyzed by the same enzyme: formation of S-adenosylmethionine (AdoMet) and triphosphate, and subsequent hydrolysis of the triphosphate. In Oryza sativa subsp. japonica (Rice), this protein is S-adenosylmethionine synthase 1 (SAM1).